A 471-amino-acid chain; its full sequence is Glutamate--tRNA ligase (471 aa).

Positions 10 to 20 (PSPTGYLHIGG) match the 'HIGH' region motif. Zn(2+) is bound by residues C107, C109, C134, and E136. The 'KMSKS' region signature appears at 244–248 (RLSKR). K247 is a binding site for ATP.

The protein belongs to the class-I aminoacyl-tRNA synthetase family. Glutamate--tRNA ligase type 1 subfamily. Monomer. The cofactor is Zn(2+).

The protein resides in the cytoplasm. It catalyses the reaction tRNA(Glu) + L-glutamate + ATP = L-glutamyl-tRNA(Glu) + AMP + diphosphate. Functionally, catalyzes the attachment of glutamate to tRNA(Glu) in a two-step reaction: glutamate is first activated by ATP to form Glu-AMP and then transferred to the acceptor end of tRNA(Glu). This chain is Glutamate--tRNA ligase, found in Anaeromyxobacter sp. (strain Fw109-5).